A 533-amino-acid polypeptide reads, in one-letter code: Homeobox protein DTH-1 (533 aa).

Disordered regions lie at residues 1 to 28 (MSSN…NECP) and 308 to 378 (LPQN…GKKR). Residues 8 to 19 (VKYDTNFDREGY) show a composition bias toward basic and acidic residues. The segment covering 308 to 317 (LPQNLPNPNQ) has biased composition (low complexity). The span at 318-333 (TDSIYSSSINENNQPI) shows a compositional bias: polar residues. Positions 360–371 (SVENNDNENSSS) are enriched in low complexity. Positions 377 to 436 (KRKRRVLFSKKQILELERHFRQKKYLSAPEREHLANLIGLSPTQVKIWFQNHRYKMKRAH) form a DNA-binding region, homeobox.

The protein belongs to the NK-2 homeobox family. In terms of tissue distribution, intestine and unidentified peripheral parenchymal cells. Slightly higher levels in the cephalic region compared to other body regions.

It localises to the nucleus. Functionally, this protein might be involved in determination and/or differentiation of nerve cells in the continuous replacement of neurons in the cephalic region. This is Homeobox protein DTH-1 (DTH-1) from Girardia tigrina (Planarian).